The primary structure comprises 239 residues: MKKKIKYNRILLKISGEFLSSKKTFNINTIFITKLIKQIKLLTNLGVQIGLVIGGGNLFRGSDLEKIGMRRSISDKIGMLSTVMNGLLLHEFMQTANIKSKIFSSTLLEGICERYHIDKAIKCLEKKSVAIFCFGLGIPFFTTDSAACIYGTEIKANILLKATKVDGVYSSDPILNKSAILYKNLSYKDILRKELKVMDYTSLILAYENKLPILVFNMYDPEILYKIIIEKSNIGTLIK.

Lysine 13–glycine 16 contributes to the ATP binding site. Glycine 55 is a UMP binding site. Glycine 56 and arginine 60 together coordinate ATP. Residues aspartate 75 and leucine 136 to threonine 143 each bind UMP. Residues threonine 163, tyrosine 169, and aspartate 172 each contribute to the ATP site.

This sequence belongs to the UMP kinase family. In terms of assembly, homohexamer.

Its subcellular location is the cytoplasm. It carries out the reaction UMP + ATP = UDP + ADP. Its pathway is pyrimidine metabolism; CTP biosynthesis via de novo pathway; UDP from UMP (UMPK route): step 1/1. With respect to regulation, inhibited by UTP. Catalyzes the reversible phosphorylation of UMP to UDP. The chain is Uridylate kinase from Buchnera aphidicola subsp. Cinara cedri (strain Cc).